The following is a 139-amino-acid chain: Holo-[acyl-carrier-protein] synthase (139 aa).

Residues aspartate 8 and glutamate 57 each coordinate Mg(2+).

It belongs to the P-Pant transferase superfamily. AcpS family. Mg(2+) is required as a cofactor.

It is found in the cytoplasm. It carries out the reaction apo-[ACP] + CoA = holo-[ACP] + adenosine 3',5'-bisphosphate + H(+). Transfers the 4'-phosphopantetheine moiety from coenzyme A to a Ser of acyl-carrier-protein. The polypeptide is Holo-[acyl-carrier-protein] synthase (Sinorhizobium medicae (strain WSM419) (Ensifer medicae)).